The chain runs to 237 residues: Demethylmenaquinone methyltransferase (237 aa).

S-adenosyl-L-methionine is bound by residues T58, D79, and 106–107; that span reads NA.

Belongs to the class I-like SAM-binding methyltransferase superfamily. MenG/UbiE family.

It carries out the reaction a 2-demethylmenaquinol + S-adenosyl-L-methionine = a menaquinol + S-adenosyl-L-homocysteine + H(+). Its pathway is quinol/quinone metabolism; menaquinone biosynthesis; menaquinol from 1,4-dihydroxy-2-naphthoate: step 2/2. Methyltransferase required for the conversion of demethylmenaquinol (DMKH2) to menaquinol (MKH2). In Bacillus cereus (strain ATCC 10987 / NRS 248), this protein is Demethylmenaquinone methyltransferase.